The sequence spans 162 residues: Nucleotide-binding protein Franean1_6074 (162 aa).

The protein belongs to the YajQ family.

Nucleotide-binding protein. The chain is Nucleotide-binding protein Franean1_6074 from Parafrankia sp. (strain EAN1pec).